Consider the following 211-residue polypeptide: MTRVALTSAVNLAKKLQEAGIRHPAVLKAISHTPRELFLDNALAHKAYENTALPIGQGQTISQPYIVARMTELLLQHQPQKVLEVGTGSGYQAAILAQLVPELCTIERIKGLQIQARQRLKRLDLHNVSFKYGDGWQGWPNRSPFDGIMVTAAAAKVPEALLSQLAEGGVLIIPVGEETQQLMRFTRRSDRFSSEVIETVKFVPLVNGELA.

The active site involves S62.

It belongs to the methyltransferase superfamily. L-isoaspartyl/D-aspartyl protein methyltransferase family.

Its subcellular location is the cytoplasm. The catalysed reaction is [protein]-L-isoaspartate + S-adenosyl-L-methionine = [protein]-L-isoaspartate alpha-methyl ester + S-adenosyl-L-homocysteine. Functionally, catalyzes the methyl esterification of L-isoaspartyl residues in peptides and proteins that result from spontaneous decomposition of normal L-aspartyl and L-asparaginyl residues. It plays a role in the repair and/or degradation of damaged proteins. This chain is Protein-L-isoaspartate O-methyltransferase, found in Shewanella sp. (strain MR-4).